The sequence spans 501 residues: Beta-secretase 1 (501 aa).

Positions 1-21 (MAPALRWLLLWVGSGMLPAQG) are cleaved as a signal peptide. A propeptide spanning residues 22-45 (THLGIRLPLRSGLAGPPLGLRLPR) is cleaved from the precursor. Residues 22–457 (THLGIRLPLR…PQTDESTLMT (436 aa)) are Extracellular-facing. One can recognise a Peptidase A1 domain in the interval 75–416 (YYVEMTVGSP…DRARKRIGFA (342 aa)). The active site involves D93. Residue K126 is modified to N6-acetyllysine. N153, N172, and N223 each carry an N-linked (GlcNAc...) asparagine glycan. 3 disulfides stabilise this stretch: C216/C420, C278/C443, and C330/C380. Residues K275, K279, and K285 each carry the N6-acetyllysine modification. D289 is an active-site residue. 3 positions are modified to N6-acetyllysine: K299, K300, and K307. N-linked (GlcNAc...) asparagine glycosylation is present at N354. Residues 458–478 (IAYVMAAICALFMLPLCLMVC) form a helical membrane-spanning segment. S-palmitoyl cysteine attachment occurs at residues C474, C478, C482, and C485. Residues 479–501 (QWRCLRCLRHQHDDFADDISLLK) lie on the Cytoplasmic side of the membrane. The interaction with RTN3 stretch occupies residues 479-501 (QWRCLRCLRHQHDDFADDISLLK). The DXXLL motif lies at 496–500 (DISLL). S498 is subject to Phosphoserine. A Glycyl lysine isopeptide (Lys-Gly) (interchain with G-Cter in ubiquitin) cross-link involves residue K501.

Belongs to the peptidase A1 family. In terms of assembly, monomer. Interacts (via DXXLL motif) with GGA1, GGA2 and GGA3 (via their VHS domain); the interaction highly increases when BACE1 is phosphorylated at Ser-498. Interacts with RTN1; RTN2; RTN3 and RTN4; the interaction leads to inhibition of amyloid precursor protein processing. Interacts with SNX6. Interacts with PCSK9. Interacts with NAT8 and NAT8B. Interacts with BIN1. Interacts (via extracellular domain) with ADAM10 (via extracellular domain). Interacts with SORL1; this interaction may affect binding with APP and hence reduce APP cleavage. Interacts with NRDC AND NRG1. Post-translationally, palmitoylation mediates lipid raft localization. Acetylated in the endoplasmic reticulum at Lys-126, Lys-275, Lys-279, Lys-285, Lys-299, Lys-300 and Lys-307. Acetylation by NAT8 and NAT8B is transient and deacetylation probably occurs in the Golgi. Acetylation regulates the maturation, the transport to the plasma membrane, the stability and the expression of the protein. In terms of processing, ubiquitinated at Lys-501, ubiquitination leads to lysosomal degradation. Monoubiquitinated and 'Lys-63'-linked polyubitinated. Deubiquitnated by USP8; inhibits lysosomal degradation. Post-translationally, phosphorylation at Ser-498 is required for interaction with GGA1 and retrograded transport from endosomal compartments to the trans-Golgi network. Non-phosphorylated BACE1 enters a direct recycling route to the cell surface. N-Glycosylated. Addition of a bisecting N-acetylglucosamine by MGAT3 blocks lysosomal targeting, further degradation and is required for maintaining stability under stress conditions.

It localises to the cell membrane. It is found in the golgi apparatus. Its subcellular location is the trans-Golgi network. The protein resides in the endoplasmic reticulum. The protein localises to the endosome. It localises to the cell surface. It is found in the cytoplasmic vesicle membrane. Its subcellular location is the membrane raft. The protein resides in the lysosome. The protein localises to the late endosome. It localises to the early endosome. It is found in the recycling endosome. Its subcellular location is the cell projection. The protein resides in the axon. The protein localises to the dendrite. It carries out the reaction Broad endopeptidase specificity. Cleaves Glu-Val-Asn-Leu-|-Asp-Ala-Glu-Phe in the Swedish variant of Alzheimer's amyloid precursor protein.. Inhibited by RTN3 and RTN4. Responsible for the proteolytic processing of the amyloid precursor protein (APP). Cleaves at the N-terminus of the A-beta peptide sequence, between residues 671 and 672 of APP, leads to the generation and extracellular release of beta-cleaved soluble APP, and a corresponding cell-associated C-terminal fragment which is later released by gamma-secretase. Cleaves CHL1. This Rattus norvegicus (Rat) protein is Beta-secretase 1 (Bace1).